A 5628-amino-acid chain; its full sequence is MGIEQLNTTRAQHDDIAVIGIACRFPGASDYRQFWDNLCERRVSIGEIPGERWDWRAYWGDPQQDANACNSRWGGFVDEVGAFDLGFFGMSAREVDKMDPQQRLALELAWHCFEDAGLRPSAVAKRDVGVFVGIANLDYKEIVEAHASEIDAYYASGVAASVASNRLSYWFDLRGPSVTVDTACSGSLYALHLAREALRRGECEMALAGGVSLLLTPRRYLGFARARMLSPTGAIRAFDDAADGMVRGEGGGLVLLKPLSRALDDGDRIFGVLAGSAVNHSGRTYSLTYPDADAQARVIRAAFDAAGVSPAQVSYVEAHGTGTPKGDPIELEGLLRVFGAQPRDALAPRCAIGSVKANIGHLESAAGIAGVIKTLLALHHGMLPPMPHFAALNHRVDAARFAAAGLAVADALAPWEAGASADGASAARIAGVSAFGFAGTNAHVVLREAPAAARAAVAAGRADGAGVLCLSAKTDAALERVRAGFVEWLARDGARHAFADICAALVSRREHFASRIAVAACDVDGALAALRARADTASSVYRAGRVALDDDGNLVDASGPHDEQADHDGSGEHGEHGERARAGADDLSRARRRASRYVRGASPDAWGPSDGPTPHVPLPDYPFERTVCWTGPRPSRAVAGPARGPAVDEAVDEAVDEAGAADGDVFVLEPRWHLAPAADARPAPARPEDAAVVVCVVADAAQRAAVERALARIATAPACMFVEPDATMGEPARAVDALVRTLDGIADRARADVSGVDTSGAAAPISVWYCADLARDARAPIDVRAYDRLLTLLQALAKTRAPLRRVLLAGVSESLAADAWPALVTVLAPRRPALAVTPVLFDHGTPEALWVSALLQEARAAGGAAVRYAAGERSVAVLARAANAASENAARLAGGAPLRTGGCYLLTGGLGGLGRLFAVRLMRRYGARVVALGRSAHDAGVQASVAALCAEAGAGTLRYLQADVCDAAAMAAVLDDIGRHEGRLNGVIHAAGCEDRASLADKSLDDVHAVLAPKLAAATVLDRLTAGLPLDFVCLFSSLAGIVGDFGCGAYALGNRLLMSYAQRADGRVDAHGRRRRVVAIAWPLWRDGAMGFDDPVKRDRYLAASGQRMLDADEGFAWFERLLASPSAAPVVLAGERARIVSWLGSIDGAPVADASPGAASSGAAAPNAASDASRDTERAEATDAAAPIVAAGAPAHAHASAPRERDAHGSARLPALRGIAARVLGADAALLDEQASFADLGFDSIGLMDFARAVGEAFGIDMSPAMLFSHVTLKRLAGHLATRLDDAPRAVAGARSGAAHASAGRACAAAGRADGARASRIDVRPPEAGAGERAADARPPLTAPEIAPEIAPESASGFASAPHPAPIPPAYEPIAIVGMSGRFPDARDIDAFWSLLMSGRGAARRVDPHDRFAAPRDEAAAWLAPVPGIDEFDPLFFDIAPAEAQRMDPRERLLLQHAWLALEDAGIGARALADHALGMFVGAEAGEYGGLSREPRSIVSDHNGVLAARLSYFLDLTGPNLSVNTACSSGLVALHLAIRSLHARECGIALAAGVNLMLSAELHDKMARAGMLSQHGVCRALDRDADGFVPGEAVVVVALKRLADALADGDAIHGVIRASGVNYDGRTNGMTAPSGLAQARLLTDAWRTAGIDPAELGYVVAHGTGTRLGDPVELNALGDALRASTGRRHFCAVTSNKPNVGHTLAASGLVSLVNLVEALRRAVIPPSAHWREGNEFVAWGDSPLRVNTVASAWPDGARRLGGASAFGMSGTNAHVIVEAAEPARARAPHAPRGGVLFVVSAKTGDALAQRLRDLADCLASDAWSDGDLADVAHTLLHGRQHFEHRSAVFARGKADAIDALRAAADAVRNAPARRTGALRLLDDYAAHLSARYAAWRDAPARDVDEARRLLEAIGDAYREGATPSALVVAPAPGRTVRLPGYPFACERHWHPAPARAGGASAGANAREPGARERAEAAAAPHVVVLTLTGSEPYLRDHLIDGQRVLPGAAHLDMARAAFERVRAAGGRAARFVALRDVVWRAPLVAGDAGAEVHVELTPSGTAFAYRILSRPADRAAAVGAALTLHSEGVVDELNEPAPEPLDLDGWRAACAGERVDGAALHARFASLGIGYGPSHRGVAHVRLGEHAALARLDLGALADADFDGFGLHPGIVDSAFQASAALSAPREDAAVPFMLRALHVYSRAARTMWAAIRVAAPAGGGAGGVDTRPIDIDLVHDDGAICASLRGWVSARWRKLAGAPPAARATAALRGWRWRAAEPDPRAAEAATRVVLLAPDFGALAAELAAHDAVRCEMLDDVSSHALPDAFAARATQAFAAVRRELAAKPGRPVLFQAVCREADSATAWGLAGLFKTAADENPLASGHVVLVSESFDRARLAAALLAERAWTGHLRYGGAGREAFAIDADEDDRDGREPAGGPPLRDDGVYAISGGAGGIGRAIARDIVARTRAARVYLLGRSAHAPSDLFATADERARIRYCRVDVADREQVHAWIAGLKRDGEALRGVVHAAGVVDDAFVVAKEPSRVHAVLRPKVAGAVWLDEATRDAPLDFFVAFSSLASAFGNAGQADYAMANAFVDGYMTERRARVAGGVSRGASLSIQWPLWADAGMRMPAAIASRLAAATGLAPLPSAEGIAAWRAALARDDANVAVLYGERAAIAAWLATSDAMPPRARAARPMPAARVDLHALRALAASLIGVDAHDINVDADIDEYGLDAVALAHLAREIGERAGRADVGLGFVRGERTLRAIARALDASAPGGDAEVDIGADADADADNAPDAEACVECAGIDARATPPDAGAPQRGAHAAAAEGSARDEAARSIAPLAGAGSPDGASALRARVGARLSALLADVLKVPVARLEPDAPFERYGIDSLTVVALNESLGRHVDALPKTLFFEYRTLAELTDYFVRRHAGAAWFAPDARAEHGAAGALATLGAATRATQTEQAEQSRVAPLAPPRRVFAAATAATRSRAASAPPAATADAIAVIGLAGRYPQARDLDAFWRNLRDGRDCITEIPAERWNHGDFFDPQKGVAGKTYSKWGGFIEGVDEFDAAFFNIAPRDAERMDPQERLFLQASYQAIEDAGYARASLGAGRVGVFAGVMYSEYQLYGIEESAAGRPAALSGSAASIANRVSYHLDLHGPSMAVDTMCSSSLTALHLACRSLQRGECELALAGGVNVSVHPNKYLMLADNRFVSSAGRCESFGAGGDGYVPAEGVGVAVLKPLRAAIADGDAIHGVICATALNHGGKNNGYTVPNPAWQAAVIEAALGEAGVAPGDVSYVEAHGTGTTLGDPIEIAGLARAFGEPGARRGAPCAIGSVKSNIGHAESAAGIAGLTKVLLQMRHRMLVPSLHADTLNPNIAFETTPFCVQRALERWERPGDGERVAGVSSFGAGGANAHVIVREYRSDDERDGRDEPASTAPARARPAWIVLSARNEDGLRARAAQLRELAAGCEGDADLHAIAYTLQTGRDAMDERLAFEATSIADLIASLDAFARGEPGKKQLRGNGRARRGDAPPAGVADARLARGEHRAALDDWVRGASIDWRRAYGPGAPFGPAPRRMHLPVYPFARTRHWLPAPLDARRRAARAGGGLHPMLDANRSEFGRQRFVVEFDGREPWLADHRVDGRRVLPGVAYLEMARAALAASAPDMHADGGATLEDVRWLRPCIVPDGGATLEIALERDGDGIAFSISQTSAHAQPALCCTGRSPSRAARGGGERIDVDAMRDAFRAAPAFDADACYRAFARRGVQYGPSHRTIERVWADGDRALARLRSARPADPRLVMWPGLLDGALQSLIGLHGLDGDLLAAPYRLARLDVHGACGPAMWALARRAGDGALDLVLCDDAGEACVTMRGFASRAAASWRTAAQAAGAPHEAVAGGDARAAFGPAAESPSAATSTSAATSPAISTSAATPAAADGDDWLLLPRWLACDLDPERDAGARAVAPRSVLAIADDACVHDLSAAAFGGASVRRMPASDAADAARLAAILGDAPRLDALVFVAPGAHARSAQALIDAQESGAIALFRIVKALLAHGYRDDALTLAIVTEQAVALYPGEPIDPAHAALHGMAGVLGRDLPRWRVLCADVERARAYAGAALVAQAGPAGEGPRINRLGRWHRRALARVDAPAARESAFRRGGVYVIVGGAGGLGRVLTEHLIRRADARVVWVGRRAADGRIAADCASFESIGAPPLYLQADASDAGAMGAVRDAVKARYGAIHGVVHSALALRDATLATMTEADFRRVLAAKLDTSVRLAEAFADEPLDFMLFFSSFAAFSFPQGQANYAAGCAFQDAFAQHLAARAPFAVKTVNWGFWGHAGVVATPAHRDRMARLGIGSIEPDAAMRSLECLLACDVGQLALINVRRDDAIAPLMTPRRVALHAPGAGPRALDSVARVRPDAERTAAARLHGGLQRDEWRDVLLSLLDATFDALGARRAAEAGGDALRAALGIAPRHARWFAASLDWLRALREGAHAAAAMSADDAWRAWARLGAACDGDAGRSAQYALVDATLRHLADIVTGRRKATEIMFPKGSMALVENVYRHHPVADYFNLAVAEIVAARAADVVRERGVRILEVGAGTGGTTARVLAVLRERGVRVDDYRFTDVSPGFLDHAAARFGAGAPFMSYGLFDVMRAPAAQGIAPHGFDIVVATNVLHATADVRASLRHCRDALRAGGLLVVNEISDKSLFTHLTFGLLDGWWAYEDAALRIDGSPALDAHHWAFALRSEGYADVAFPWADAHDLGQQIVLADAGDVVDAADAQAMRAREAEPWAWATGAESESVLEAVSETETALTPAPTQSPAAPSDATRTAALLRSLLGEALKVEPVSIEGDGAFGDYGLDSIIGMGFVDAINRALDLSLDVTAVFEHNTVDALAAYVGSQLAARAPAAAGARDVEPASSLASSSASDFVSARLPAVDAAASSAFDAAPRARTGADAPDTSLASSASSISSARASSPASPARDAASFDVAIVGASCRFPGADGLDALWRCIVDERSCVRDVGAKWLRTRDPADAGADYRAAVLDGIDRFDAARFGISPREARRMDPQQRLLLTEAWRALQDAGDAARAAAHRTGVFVAAGANEYGAGLDAADNPFSMTSMAPALMPNRISYALDLRGPSEMTDTACSSSLVALHRAVRSLRDGECDQAVVAAVNLLLSAEKFEGFAELGFLSPSGRTRSFDAAGDGFVRGEGAAALVLKPLAAARRDGDFVYACIKGTAVHHGGRGAALTAPNAAGIREAMSAAYRNAGIDARTVSYLEAHGVGSPVGDAIELNAIRDAYAALSGEPAPAAPAASCRIGSVKPVFGHVELASGLLAVCKVLMALRHGVLPGVPGFERPNPHANLAGSPLVVARAAAPWPAPRDDANGAAVPRRASVNSFGFGGVNAHVVLEEDVSSRHAPRVFAQPPLDGARHWECPREIAGAPAARPGRPAPDAPHARIEAVIRDALAQALGVAPDAFELAVPLGEYGADSMLDLHLATRIEETLGVQLSVRELFAHRTLGALRDHVAERIARDGGRRAAEAARAPDAAMASDVAEASVVSEATEASDASEASDASEASEASEASEASKAPADLAALLERFRAGQMDLDDIVDLV.

The 436-residue stretch at 13 to 448 (HDDIAVIGIA…GTNAHVVLRE (436 aa)) folds into the Ketosynthase family 3 (KS3) 1 domain. Catalysis depends on for beta-ketoacyl synthase 1 activity residues Cys184, His319, and His361. 2 disordered regions span residues 552–613 (GNLV…DGPT) and 1156–1183 (ASPGAASSGAAAPNAASDASRDTERAEA). The segment covering 559-589 (GPHDEQADHDGSGEHGEHGERARAGADDLSR) has biased composition (basic and acidic residues). Positions 1156 to 1173 (ASPGAASSGAAAPNAASD) are enriched in low complexity. Basic and acidic residues predominate over residues 1174–1183 (ASRDTERAEA). One can recognise a Carrier 1 domain in the interval 1209 to 1286 (AHGSARLPAL…RLAGHLATRL (78 aa)). Residue Ser1246 is modified to O-(pantetheine 4'-phosphoryl)serine. The Ketosynthase family 3 (KS3) 2 domain occupies 1373 to 1781 (YEPIAIVGMS…GTNAHVIVEA (409 aa)). Residues Cys1529, His1664, and His1704 each act as for beta-ketoacyl synthase 2 activity in the active site. An N-terminal hotdog fold 1 region spans residues 1967-2099 (AREPGARERA…GVVDELNEPA (133 aa)). The PKS/mFAS DH 1 domain occupies 1967 to 2261 (AREPGARERA…SARWRKLAGA (295 aa)). The active-site Proton acceptor; for dehydratase activity 1 is His1999. The segment at 2113-2261 (AGERVDGAAL…SARWRKLAGA (149 aa)) is C-terminal hotdog fold 1. Asp2175 acts as the Proton donor; for dehydratase activity 1 in catalysis. Residues 2426-2446 (DADEDDRDGREPAGGPPLRDD) form a disordered region. Residues 2702 to 2780 (PAARVDLHAL…AIARALDASA (79 aa)) enclose the Carrier 2 domain. A disordered region spans residues 2817-2836 (TPPDAGAPQRGAHAAAAEGS). Positions 2822–2835 (GAPQRGAHAAAAEG) are enriched in low complexity. Residues 2862–2935 (ARVGARLSAL…ELTDYFVRRH (74 aa)) enclose the Carrier 3 domain. Ser2896 carries the O-(pantetheine 4'-phosphoryl)serine modification. Residues 3005 to 3430 (ADAIAVIGLA…GANAHVIVRE (426 aa)) form the Ketosynthase family 3 (KS3) 3 domain. Active-site for beta-ketoacyl synthase 3 activity residues include Cys3175, His3310, and His3351. The interval 3526–3546 (PGKKQLRGNGRARRGDAPPAG) is disordered. An N-terminal hotdog fold 2 region spans residues 3621–3743 (HPMLDANRSE…GRSPSRAARG (123 aa)). Positions 3621 to 3895 (HPMLDANRSE…SRAAASWRTA (275 aa)) constitute a PKS/mFAS DH 2 domain. His3650 (proton acceptor; for dehydratase activity 2) is an active-site residue. The tract at residues 3758-3895 (RAAPAFDADA…SRAAASWRTA (138 aa)) is C-terminal hotdog fold 2. Asp3818 (proton donor; for dehydratase activity 2) is an active-site residue. A disordered region spans residues 3917–3942 (PAAESPSAATSTSAATSPAISTSAAT). One can recognise a Carrier 4 domain in the interval 4840–4914 (TRTAALLRSL…ALAAYVGSQL (75 aa)). Ser4874 carries the post-translational modification O-(pantetheine 4'-phosphoryl)serine. The disordered stretch occupies residues 4960–4992 (APRARTGADAPDTSLASSASSISSARASSPASP). Residues 4998-5424 (SFDVAIVGAS…GVNAHVVLEE (427 aa)) form the Ketosynthase family 3 (KS3) 4 domain. Residues Cys5158, His5293, and His5339 each act as for beta-ketoacyl synthase 4 activity in the active site. The region spanning 5470 to 5544 (ARIEAVIRDA…ALRDHVAERI (75 aa)) is the Carrier 5 domain. Ser5504 is modified (O-(pantetheine 4'-phosphoryl)serine). Residues 5573-5603 (VSEATEASDASEASDASEASEASEASEASKA) are disordered.

Pantetheine 4'-phosphate serves as cofactor.

It localises to the cytoplasm. It participates in antibiotic biosynthesis. In terms of biological role, involved in production of the polyketide antibiotic thailandamide. This Burkholderia thailandensis (strain ATCC 700388 / DSM 13276 / CCUG 48851 / CIP 106301 / E264) protein is Polyketide synthase ThaG.